A 348-amino-acid chain; its full sequence is Phospho-2-dehydro-3-deoxyheptonate aldolase, Trp-sensitive (348 aa).

This sequence belongs to the class-I DAHP synthase family.

It carries out the reaction D-erythrose 4-phosphate + phosphoenolpyruvate + H2O = 7-phospho-2-dehydro-3-deoxy-D-arabino-heptonate + phosphate. It participates in metabolic intermediate biosynthesis; chorismate biosynthesis; chorismate from D-erythrose 4-phosphate and phosphoenolpyruvate: step 1/7. Functionally, stereospecific condensation of phosphoenolpyruvate (PEP) and D-erythrose-4-phosphate (E4P) giving rise to 3-deoxy-D-arabino-heptulosonate-7-phosphate (DAHP). The protein is Phospho-2-dehydro-3-deoxyheptonate aldolase, Trp-sensitive (aroH) of Salmonella typhi.